The primary structure comprises 3902 residues: Mediator of RNA polymerase II transcription subunit 12 (3902 aa).

Disordered stretches follow at residues 414–576 (ESLT…EELP), 619–674 (FEPF…NPKL), 694–940 (AFDP…LEAL), 977–1029 (VVEK…PEPP), 1812–1831 (TSHK…TETR), 2463–2675 (TVEP…NRKQ), 2719–2771 (AGAS…SSSM), 2876–3151 (RIME…PEMQ), 3195–3549 (LQAG…SSNQ), and 3563–3902 (AGLN…QQQY). The segment covering 420-430 (EPEEDPEEGPE) has biased composition (acidic residues). Over residues 709-721 (PTPPEAPPPPPPV) the composition is skewed to pro residues. Composition is skewed to basic and acidic residues over residues 740–802 (EDGK…EHLN), 912–928 (KAGD…KKPD), 977–1004 (VVEK…EKLP), and 1018–1027 (KTPEKPKTPE). Basic residues predominate over residues 1812-1824 (TSHKTKDVKRKSA). The tract at residues 2409–3902 (QTTRLDKVAK…MGQFPNQQQY (1494 aa)) is required for nuclear localization. Residues 2474–2547 (AAVKKPEEET…VTAKDTEKDT (74 aa)) are compositionally biased toward basic and acidic residues. Residues 2480-2526 (EEETAEKKKDEAKKADEKTTKADDEKKKDETADAKKDNEKQKEEKDK) adopt a coiled-coil conformation. Composition is skewed to low complexity over residues 2548–2566 (AAPT…AAPD), 2614–2632 (SRAN…SSTT), and 2734–2748 (PHPG…QHQG). Residues 2876 to 2979 (RIMEEQRILR…ERLERERVAR (104 aa)) show a composition bias toward basic and acidic residues. Low complexity-rich tracts occupy residues 2980-3001 (EALA…QAQQ), 3010-3143 (QQQR…QRNP), 3196-3205 (QAGQAAGQQQ), and 3226-3236 (PQQQQQQPQQP). The segment covering 3237-3248 (GTSQIPNTTPTR) has biased composition (polar residues). Composition is skewed to low complexity over residues 3250–3275 (ANPM…GQPG), 3284–3295 (GQQQQNQFQRQG), and 3317–3389 (GQQQ…FGRQ). The span at 3391–3409 (APNQENFQQQPGFNQNAAG) shows a compositional bias: polar residues. Low complexity-rich tracts occupy residues 3410-3446 (QNYQ…QQQN), 3454-3539 (QSQQ…QGNQ), and 3570-3619 (SSGN…RPGM). Over residues 3620-3649 (GQQGMGQQGMGQQGGMGQSGRGQPGMGGQS) the composition is skewed to gly residues. Composition is skewed to low complexity over residues 3663–3700 (MGQP…QQQH), 3710–3742 (QQGR…QQAQ), and 3760–3830 (QQQQ…HRGQ). A compositionally biased stretch (gly residues) spans 3831-3841 (GQQGHGMGGAG). Positions 3842 to 3888 (QQHQQVPQQQQNQYFQPQQQQDQRMQQQPGGQQQQQQGQSGQQQNNQ) are enriched in low complexity. Residues 3889–3902 (HYNNMGQFPNQQQY) are compositionally biased toward polar residues.

This sequence belongs to the Mediator complex subunit 12 family. Component of the Mediator complex.

Its subcellular location is the nucleus. Functionally, component of the Mediator complex, a coactivator involved in regulated gene transcription of nearly all RNA polymerase II-dependent genes. Mediator functions as a bridge to convey information from gene-specific regulatory proteins to the basal RNA polymerase II transcription machinery. Mediator is recruited to promoters by direct interactions with regulatory proteins and serves as a scaffold for the assembly of a functional preinitiation complex with RNA polymerase II and the general transcription factors. The polypeptide is Mediator of RNA polymerase II transcription subunit 12 (dpy-22) (Caenorhabditis briggsae).